We begin with the raw amino-acid sequence, 571 residues long: Streptolysin O (571 aa).

An N-terminal signal peptide occupies residues 1–33; it reads MSNKKTFKKYSRVAGLLTAALIIGNLVTANAES. The tract at residues 30–108 is disordered; the sequence is NAESNKQNTA…KKSEEDHTEE (79 aa). The span at 37–48 shows a compositional bias: low complexity; that stretch reads NTASTETTTTNE. Composition is skewed to basic and acidic residues over residues 50–68 and 79–108; these read PKPESSELTTEKAGQKTDD and APKEMPLESAEKEEKKSEDKKKSEEDHTEE. 4 beta stranded membrane-spanning segments follow: residues 260–273, 280–289, 358–367, and 375–387; these read KSQIEAALNVNSKI, IDFKSISKGE, SNDVEAAFSA, and KTNGKYSDILENS. Residues 529–539 carry the Conserved undecapeptide motif; sequence ECTGLAWEWWR. Residues 561-562 carry the Cholesterol binding motif; the sequence is TL.

The protein belongs to the cholesterol-dependent cytolysin family. As to quaternary structure, homooligomeric pore complex of 35 to 50 subunits; when inserted in the host membrane.

It localises to the secreted. The protein localises to the host cell membrane. Functionally, a cholesterol-dependent toxin that causes cytolysis by forming pores in cholesterol containing host membranes. After binding to target membranes, the protein undergoes a major conformation change, leading to its insertion in the host membrane and formation of an oligomeric pore complex. Cholesterol is required for binding to host membranes, membrane insertion and pore formation; cholesterol binding is mediated by a Thr-Leu pair in the C-terminus. Can be reversibly inactivated by oxidation. This chain is Streptolysin O (slo), found in Streptococcus pyogenes serotype M18 (strain MGAS8232).